The chain runs to 50 residues: Large ribosomal subunit protein bL33 (50 aa).

The protein belongs to the bacterial ribosomal protein bL33 family.

This is Large ribosomal subunit protein bL33 from Koribacter versatilis (strain Ellin345).